The chain runs to 73 residues: Ocellatin-PT6 (73 aa).

The first 22 residues, 1–22, serve as a signal peptide directing secretion; it reads MAFLKKSLFLVLFLGLVSLSIC. Positions 23–39 are excised as a propeptide; it reads DEEKRQDEDDDDDDDEE.

As to expression, expressed by the skin glands.

The protein resides in the secreted. Functionally, has antibacterial activity against Gram-negative bacterium E.coli ATCC 25922 (MIC=120 uM) but not against S.pneumoniae ATCC 700603, S.choleraesuis ATCC 14028 or against Gram-positive bacterium S.aureus ATCC 29313. Shows no hemolytic activity and no cytotoxicity. The sequence is that of Ocellatin-PT6 from Leptodactylus pustulatus (Ceara white-lipped frog).